The sequence spans 419 residues: O-methyltransferase desB (419 aa).

Residues 255-256 (GG), D280, 306-307 (DF), and R323 each bind S-adenosyl-L-methionine. H326 functions as the Proton acceptor in the catalytic mechanism.

It belongs to the class I-like SAM-binding methyltransferase superfamily. Cation-independent O-methyltransferase family. It depends on S-adenosyl-L-methionine as a cofactor.

It participates in secondary metabolite biosynthesis. Its function is as follows. Non-reducing polyketide synthase; part of the gene cluster that mediates the biosynthesis of the bicoumarin desertorin. The non-reducing polyketide synthase desS first catalyzes the formation of the pentaketidic 4,7-dihydroxy-5-methylcoumarin from acetyl coenzyme A and 4 malonyl coenzyme A molecules. Further O-methylation by desB leads to the formation of 7-demethylsiderin. Then, an oxidative phenol coupling catalyzed by the cytochrome P450 monooxygenase desC forms the 6,8'-dimer M-desertorin A via dimerization the monomeric precursor, 7-demethylsiderin. M-desertorin A is further converted to M-desertorin C. The chain is O-methyltransferase desB from Aspergillus desertorum (Emericella desertorum).